The chain runs to 144 residues: Maximins 4/H3 type 1 (144 aa).

The first 18 residues, 1 to 18 (MNFKYIIAVSFFIASAYA), serve as a signal peptide directing secretion. A propeptide spanning residues 19-43 (RSEEKDVQSLSQRDVLEEESLREIR) is cleaved from the precursor. At asparagine 70 the chain carries Asparagine amide. Positions 74–123 (TAEDHEVMKRLEAVMRDLDSLDHPEEASERETRGFNQEEIANLFTKKEKR) are excised as a propeptide. Isoleucine amide is present on isoleucine 143.

Belongs to the bombinin family. Expressed by the skin glands.

It is found in the secreted. In terms of biological role, maximin-4 shows antibacterial activity against both Gram-positive and Gram-negative bacteria. It also shows antimicrobial activity against the fungus C.albicans, but not against A.flavus nor P.uticale. It has little hemolytic activity. It does not possess a significant cytotoxicity against tumor cell lines. It does not possess a significant anti-HIV activity. Maximin-H3 shows antibacterial activity against both Gram-positive and Gram-negative bacteria. It also shows antimicrobial activity against the fungus C.albicans. Shows strong hemolytic activity. This Bombina maxima (Giant fire-bellied toad) protein is Maximins 4/H3 type 1.